A 265-amino-acid chain; its full sequence is Aquaporin-5 (265 aa).

Over 1–12 the chain is Cytoplasmic; the sequence is MKKEVCSVAFLK. The helical transmembrane segment at 13-33 threads the bilayer; it reads AVFAEFLATLIFVFFGLGSAL. At 34-39 the chain is on the extracellular side; the sequence is KWPSAL. The helical transmembrane segment at 40–60 threads the bilayer; it reads PTILQIALAFGLAIGTLAQAL. Over 61 to 65 the chain is Cytoplasmic; that stretch reads GPVSG. The segment at residues 66–74 is an intramembrane region (discontinuously helical); sequence GHINPAITL. The short motif at 69–71 is the NPA 1 element; sequence NPA. At 75 to 87 the chain is on the cytoplasmic side; the sequence is ALLVGNQISLLRA. The helical transmembrane segment at 88 to 108 threads the bilayer; it reads FFYVAAQLVGAIAGAGILYGV. Residues 109-126 lie on the Extracellular side of the membrane; the sequence is APLNARGNLAVNALNNNT. Residues asparagine 124 and asparagine 125 are each glycosylated (N-linked (GlcNAc...) asparagine). Residues 127–147 form a helical membrane-spanning segment; that stretch reads TQGQAMVVELILTFQLALCIF. The Cytoplasmic portion of the chain corresponds to 148-158; it reads ASTDSRRTSPV. The helical transmembrane segment at 159–179 threads the bilayer; the sequence is GSPALSIGLSVTLGHLVGIYF. Residue threonine 180 is a topological domain, extracellular. An intramembrane region (discontinuously helical) is located at residues 181–191; the sequence is GCSMNPARSFG. The NPA 2 motif lies at 185–187; the sequence is NPA. Residues 192-203 lie on the Extracellular side of the membrane; the sequence is PAVVMNRFSPAH. Residues 204 to 224 traverse the membrane as a helical segment; that stretch reads WVFWVGPIVGAVLAAILYFYL. The Cytoplasmic segment spans residues 225–265; sequence LFPNSLSLSERVAIIKGTYEPDEDWEEQREERKKTMELTTR.

The protein belongs to the MIP/aquaporin (TC 1.A.8) family. As to quaternary structure, homotetramer; each monomer provides an independent water pore. Interacts with TRPV4; the interaction is probably indirect and regulates TRPV4 activation by hypotonicity. As to expression, detected in skin eccrine sweat glands, at the apical cell membrane and at intercellular canaliculi (at protein level).

It is found in the apical cell membrane. It localises to the cell membrane. The protein resides in the cytoplasmic vesicle membrane. It carries out the reaction H2O(in) = H2O(out). Functionally, aquaporins form homotetrameric transmembrane channels, with each monomer independently mediating water transport across the plasma membrane along its osmotic gradient. Plays an important role in fluid secretion in salivary glands. Required for TRPV4 activation by hypotonicity. Together with TRPV4, controls regulatory volume decrease in salivary epithelial cells. Seems to play a redundant role in water transport in the eye, lung and in sweat glands. The protein is Aquaporin-5 of Homo sapiens (Human).